The following is a 112-amino-acid chain: Protein NIM1-INTERACTING 3 (112 aa).

Disordered stretches follow at residues 1–20 (MDRD…EEKM) and 77–112 (EKAA…NLSL). Coiled-coil stretches lie at residues 1–35 (MDRD…EMRK) and 69–96 (NKAE…SKEK). Low complexity predominate over residues 77–89 (EKAANESSSASNE).

The protein belongs to the NPR1-interactor family. In terms of assembly, interacts with NPR1 C-terminal region.

The protein resides in the nucleus. The chain is Protein NIM1-INTERACTING 3 from Arabidopsis thaliana (Mouse-ear cress).